We begin with the raw amino-acid sequence, 118 residues long: Large ribosomal subunit protein bL19 (118 aa).

It belongs to the bacterial ribosomal protein bL19 family.

In terms of biological role, this protein is located at the 30S-50S ribosomal subunit interface and may play a role in the structure and function of the aminoacyl-tRNA binding site. This is Large ribosomal subunit protein bL19 from Campylobacter jejuni subsp. jejuni serotype O:6 (strain 81116 / NCTC 11828).